The chain runs to 230 residues: 2,3-bisphosphoglycerate-dependent phosphoglycerate mutase 1 (230 aa).

Substrate-binding positions include 8–15, 21–22, Arg-60, 87–90, Lys-98, 114–115, and 183–184; these read RHGQSEWN, TG, ERHY, RR, and GN. His-9 acts as the Tele-phosphohistidine intermediate in catalysis. The active-site Proton donor/acceptor is the Glu-87.

It belongs to the phosphoglycerate mutase family. BPG-dependent PGAM subfamily.

It catalyses the reaction (2R)-2-phosphoglycerate = (2R)-3-phosphoglycerate. Its pathway is carbohydrate degradation; glycolysis; pyruvate from D-glyceraldehyde 3-phosphate: step 3/5. Catalyzes the interconversion of 2-phosphoglycerate and 3-phosphoglycerate. This Lactobacillus johnsonii (strain CNCM I-12250 / La1 / NCC 533) protein is 2,3-bisphosphoglycerate-dependent phosphoglycerate mutase 1.